A 113-amino-acid polypeptide reads, in one-letter code: TGSGKYNILHNDNHNLDLTGKFLECSRSNPNLSDYNKYSAILDYLYKDKLSASLGVAHSGLLDRTDLSALGKVNLLNDKNTRLDLFGGLTKSMSPKFDSGLKPNFGLQLESSF.

This sequence belongs to the attacin/sarcotoxin-2 family.

The protein localises to the secreted. In terms of biological role, has antibacterial activity against both Gram-positive and Gram-negative bacteria. The protein is Defense protein 2 of Lonomia obliqua (Moth).